The following is a 538-amino-acid chain: 2-isopropylmalate synthase (538 aa).

One can recognise a Pyruvate carboxyltransferase domain in the interval 6-277 (LIIFDTTLRD…DSTVPLSTID (272 aa)). Asp-15, His-206, His-208, and Asn-242 together coordinate Mn(2+). Residues 406–538 (RLEQVQVSCG…AHPDAAAQKL (133 aa)) are regulatory domain.

The protein belongs to the alpha-IPM synthase/homocitrate synthase family. LeuA type 1 subfamily. As to quaternary structure, homodimer. Mn(2+) is required as a cofactor.

The protein localises to the cytoplasm. It carries out the reaction 3-methyl-2-oxobutanoate + acetyl-CoA + H2O = (2S)-2-isopropylmalate + CoA + H(+). Its pathway is amino-acid biosynthesis; L-leucine biosynthesis; L-leucine from 3-methyl-2-oxobutanoate: step 1/4. Its function is as follows. Catalyzes the condensation of the acetyl group of acetyl-CoA with 3-methyl-2-oxobutanoate (2-ketoisovalerate) to form 3-carboxy-3-hydroxy-4-methylpentanoate (2-isopropylmalate). The polypeptide is 2-isopropylmalate synthase (Gloeobacter violaceus (strain ATCC 29082 / PCC 7421)).